We begin with the raw amino-acid sequence, 271 residues long: Chymotrypsin BII (271 aa).

The signal sequence occupies residues 1-15; the sequence is MIGKLSLLLVCVAVA. Positions 16–45 are cleaved as a propeptide — activation peptide; that stretch reads SGNPAAGKPWHWKSPKPLVDPRIHVNATPR. The 223-residue stretch at 46-268 folds into the Peptidase S1 domain; the sequence is IVGGVEATPH…YLDWIEQKTG (223 aa). C71 and C87 are disulfide-bonded. Catalysis depends on charge relay system residues H86 and D132. Cystine bridges form between C196–C209 and C219–C245. The active-site Charge relay system is S223.

The protein belongs to the peptidase S1 family.

It localises to the secreted. Its subcellular location is the extracellular space. It carries out the reaction Preferential cleavage: Tyr-|-Xaa, Trp-|-Xaa, Phe-|-Xaa, Leu-|-Xaa.. Serine protease with chymotryptic and collagenolytic activities. In Penaeus vannamei (Whiteleg shrimp), this protein is Chymotrypsin BII.